Consider the following 169-residue polypeptide: Cell division inhibitor SulA (169 aa).

Positions 106-112 (ALRTGNY) are ftsZ binding. The segment at 162–169 (KIHSNLYH) is lon protease binding.

It belongs to the SulA family. Interacts with FtsZ. Post-translationally, is rapidly cleaved and degraded by the Lon protease once DNA damage is repaired.

Component of the SOS system and an inhibitor of cell division. Accumulation of SulA causes rapid cessation of cell division and the appearance of long, non-septate filaments. In the presence of GTP, binds a polymerization-competent form of FtsZ in a 1:1 ratio, thus inhibiting FtsZ polymerization and therefore preventing it from participating in the assembly of the Z ring. This mechanism prevents the premature segregation of damaged DNA to daughter cells during cell division. The polypeptide is Cell division inhibitor SulA (Citrobacter koseri (strain ATCC BAA-895 / CDC 4225-83 / SGSC4696)).